We begin with the raw amino-acid sequence, 102 residues long: MSRTENIEHVEESVESELKQPSMYKVILNNDDYTPMDFVIEILQLFFRKDEAQATEIMLAIHHKGKGICGIYPFGIAETKVAQVNQFARQNEHPLLCSLEEA.

Belongs to the ClpS family. In terms of assembly, binds to the N-terminal domain of the chaperone ClpA.

In terms of biological role, involved in the modulation of the specificity of the ClpAP-mediated ATP-dependent protein degradation. The sequence is that of ATP-dependent Clp protease adapter protein ClpS from Shewanella piezotolerans (strain WP3 / JCM 13877).